The chain runs to 72 residues: Crustacean hyperglycemic hormone A (72 aa).

The residue at position 1 (Q1) is a Pyrrolidone carboxylic acid. Position 3 is a D-phenylalanine; in form CHHA-II (F3). 3 disulfides stabilise this stretch: C7-C43, C23-C39, and C26-C52. A Valine amide modification is found at V72.

In terms of processing, stereoinversion of L-Phe (in CHHA-I) to D-Phe (in CHHA-II).

The protein resides in the secreted. In terms of biological role, hormone found in the sinus gland of isopods and decapods which controls the blood sugar level. Has a secretagogue action over the amylase released from the midgut gland. May act as a stress hormone and may be involved in the control of molting and reproduction. The polypeptide is Crustacean hyperglycemic hormone A (Cherax destructor (Common yabby crayfish)).